A 507-amino-acid chain; its full sequence is MAEQGRGQRGSGYGLGLSTRTQVTGYQFLARRTAMALTRWRVRMEIEPGRRQTLAVVASVSAALVICLGSLLWSFISPSGQINDSPIIADRDSGALYVRVGDRLYPALNLASARLITGRASNPHLVRGSQIDSMPHGPLVGIPGAPSDFNPASPATSSWLVCDTVAGPSTMPQSPHGVTVTVIDGTPDLTGHRRVLKGSDAVVLRYGGDAWVIREGRRSRIDATDRSVLLPLGLTPEQVTQARPMSHALYDALPVGPELVVPEVPDDGAAATFPGAPGPVGTVIVTPQISGPQQYSLVLTDGVQTLPPLVAQILQNAGRPGNTKPVTVQPSSLAKMPVVNRLDLSAYPDDPLNVMDIRDNPSTCWWWERTAGENRSRVQVISGPNIPVAPHEMNKVVDLVKADMSGREADQVYFGPNFANFVAVTGNNPAAQTTESLWWLTEAGARFGVEDTKEAREALGLGLTPSPAPWVVLRLLPQGPTLSRADALVEHDTLPMDMSPAELVVPK.

A helical transmembrane segment spans residues 56 to 76; sequence VVASVSAALVICLGSLLWSFI.

The protein belongs to the EccB family. Part of the ESX-5 / type VII secretion system (T7SS), which is composed of cytosolic and membrane components. The ESX-5 membrane complex is composed of EccB5, EccC5, EccD5 and EccE5.

Its subcellular location is the cell inner membrane. In terms of biological role, an ATPase. Part of the ESX-5 specialized secretion system, which is responsible for the secretion of EsxN and a number of PE_PGRS and PPE proteins. This Mycobacterium marinum (strain ATCC BAA-535 / M) protein is ESX-5 secretion system ATPase EccB5.